Consider the following 324-residue polypeptide: Autolytic lysozyme (324 aa).

Active-site residues include Asp-5 and Glu-91. 5 tandem repeats follow at residues 212–234, 235–254, 255–277, 278–300, and 301–324. The tract at residues 212–324 is 5 X 23 AA tandem repeats; it reads LLKRGLEVDG…ATWSKLLDEN (113 aa).

It belongs to the glycosyl hydrolase 25 family. As to quaternary structure, monomer.

The protein localises to the secreted. Its subcellular location is the cytoplasm. The catalysed reaction is Hydrolysis of (1-&gt;4)-beta-linkages between N-acetylmuramic acid and N-acetyl-D-glucosamine residues in a peptidoglycan and between N-acetyl-D-glucosamine residues in chitodextrins.. The sequence is that of Autolytic lysozyme (lyc) from Clostridium acetobutylicum (strain ATCC 824 / DSM 792 / JCM 1419 / IAM 19013 / LMG 5710 / NBRC 13948 / NRRL B-527 / VKM B-1787 / 2291 / W).